Here is a 319-residue protein sequence, read N- to C-terminus: Pantothenate kinase (319 aa).

97–104 (GSVAVGKS) contacts ATP.

It belongs to the prokaryotic pantothenate kinase family.

The protein localises to the cytoplasm. The enzyme catalyses (R)-pantothenate + ATP = (R)-4'-phosphopantothenate + ADP + H(+). Its pathway is cofactor biosynthesis; coenzyme A biosynthesis; CoA from (R)-pantothenate: step 1/5. In Mesorhizobium japonicum (strain LMG 29417 / CECT 9101 / MAFF 303099) (Mesorhizobium loti (strain MAFF 303099)), this protein is Pantothenate kinase.